The primary structure comprises 748 residues: Glucans biosynthesis glucosyltransferase H (748 aa).

7 helical membrane-spanning segments follow: residues 85–107 (LIVR…GYGM), 127–149 (FLVL…FVLL), 443–465 (GIGS…LISL), 494–516 (AWVF…LVLI), 529–551 (GRVL…CMMI), 587–606 (LAGP…SVSL), and 608–630 (LLLW…IMTS).

This sequence belongs to the glycosyltransferase 2 family. OpgH subfamily.

It localises to the cell inner membrane. The protein operates within glycan metabolism; osmoregulated periplasmic glucan (OPG) biosynthesis. Its function is as follows. Involved in the biosynthesis of osmoregulated periplasmic glucans (OPGs). This is Glucans biosynthesis glucosyltransferase H from Bradyrhizobium diazoefficiens (strain JCM 10833 / BCRC 13528 / IAM 13628 / NBRC 14792 / USDA 110).